The chain runs to 123 residues: uncharacterized protein (123 aa).

Residues 1–21 (MHIIAKSILLMAVSFLVIIFT) form a helical membrane-spanning segment.

The protein resides in the membrane. This is an uncharacterized protein from Methanocaldococcus jannaschii (strain ATCC 43067 / DSM 2661 / JAL-1 / JCM 10045 / NBRC 100440) (Methanococcus jannaschii).